Here is a 210-residue protein sequence, read N- to C-terminus: Calcium-activated potassium channel subunit beta-4 (210 aa).

The Cytoplasmic segment spans residues 1-19 (MAKLRVAYEYTEAEDKSIR). Residues 20 to 40 (LGLFLIISGVVSLFIFGFCWL) form a helical membrane-spanning segment. Topologically, residues 41-167 (SPALQDLQAT…DVLLHRTHDE (127 aa)) are extracellular. Residues asparagine 53 and asparagine 90 are each glycosylated (N-linked (GlcNAc...) asparagine). A helical membrane pass occupies residues 168–188 (IVLLHCFLWPLVTFVVGVLIV). The Cytoplasmic portion of the chain corresponds to 189–210 (VLTICAKSLAVKAEAMKKRKFS).

The protein belongs to the KCNMB (TC 8.A.14.1) family. KCNMB4 subfamily. Interacts with KCNMA1 tetramer. There are probably 4 molecules of KCMNB4 per KCNMA1 tetramer. Interacts with FMR1 (via N-terminus). Post-translationally, phosphorylated. Phosphorylation modulates its effect on KCNMA1 activation kinetics. In terms of processing, N-glycosylated. A highly glycosylated form is promoted by KCNMA1. Glycosylation, which is not required for the interaction with KCNMA1 and subcellular location, increases protection against charybdotoxin. Predominantly expressed in brain. In brain, it is expressed in the cerebellum, cerebral cortex, medulla, spinal cord, occipital pole, frontal lobe, temporal lobe, putamen, amygdala, caudate nucleus, corpus callosum, hippocampus, substantia nigra and thalamus. Weakly or not expressed in other tissues.

It localises to the membrane. Functionally, regulatory subunit of the calcium activated potassium KCNMA1 (maxiK) channel. Modulates the calcium sensitivity and gating kinetics of KCNMA1, thereby contributing to KCNMA1 channel diversity. Decreases the gating kinetics and calcium sensitivity of the KCNMA1 channel, but with fast deactivation kinetics. May decrease KCNMA1 channel openings at low calcium concentrations but increases channel openings at high calcium concentrations. Makes KCNMA1 channel resistant to 100 nM charybdotoxin (CTX) toxin concentrations. The sequence is that of Calcium-activated potassium channel subunit beta-4 (KCNMB4) from Homo sapiens (Human).